A 244-amino-acid polypeptide reads, in one-letter code: 5-oxoprolinase subunit A (244 aa).

The protein belongs to the LamB/PxpA family. Forms a complex composed of PxpA, PxpB and PxpC.

It carries out the reaction 5-oxo-L-proline + ATP + 2 H2O = L-glutamate + ADP + phosphate + H(+). In terms of biological role, catalyzes the cleavage of 5-oxoproline to form L-glutamate coupled to the hydrolysis of ATP to ADP and inorganic phosphate. This chain is 5-oxoprolinase subunit A, found in Salmonella agona (strain SL483).